Here is a 1604-residue protein sequence, read N- to C-terminus: Collagen alpha-1(XVI) chain (1604 aa).

The first 21 residues, 1 to 21, serve as a signal peptide directing secretion; the sequence is MWVSWAPGLWLLGLWATFGHG. N-linked (GlcNAc...) asparagine glycosylation occurs at Asn47. Positions 50 to 231 constitute a Laminin G-like domain; it reads GFNLIHRLSL…LQQVHIYCDP (182 aa). The segment at 232–374 is nonhelical region 10 (NC10); it reads ELVLEEGCCE…SPDAPLQCAE (143 aa). The span at 301 to 311 shows a compositional bias: basic and acidic residues; it reads AERGAKVHQET. Residues 301 to 509 form a disordered region; sequence AERGAKVHQE…KGEKGDPCEV (209 aa). A glycan (N-linked (GlcNAc...) asparagine) is linked at Asn327. The region spanning 375-423 is the Collagen-like 1 domain; that stretch reads GPKGEKGESGALGPSGLPGSTGEKGQKGEKGDGGIKGVPGKPGRDGRPG. The segment at 375 to 506 is triple-helical region 9 (COL9) with 3 imperfections; it reads GPKGEKGESG…PGVKGEKGDP (132 aa). A compositionally biased stretch (low complexity) spans 383-397; the sequence is SGALGPSGLPGSTGE. Over residues 398–407 the composition is skewed to basic and acidic residues; sequence KGQKGEKGDG. Residues 449–460 show a composition bias toward pro residues; the sequence is PGPPGLPGPPGI. Residues 486–495 show a composition bias toward gly residues; the sequence is GKEGPGGKPG. A nonhelical region 9 (NC9) region spans residues 507–521; sequence CEVCPTLPEGFQNFV. Residues 522–555 form a triple-helical region 8 (COL8) with 1 imperfection region; sequence GLPGKPGPKGEPGDPVPARGDPGIQGIKGEKGEP. The short motif at 540 to 542 is the Cell attachment site element; it reads RGD. Residues 556–572 are nonhelical region 8 (NC8); the sequence is CLSCSSVVGAQHLVSST. Positions 573–631 are triple-helical region 7 (COL7) with 1 imperfection; sequence GASGDVGSPGFGLPGLPGRAGVPGLKGEKGNFGEAGPAGSPGPPGPVGPAGIKGAKGEP. Collagen-like domains are found at residues 573–633 and 667–721; these read GASG…EPCE and GLPG…GEKG. The interval 604–917 is disordered; it reads FGEAGPAGSP…PPGIPGPPGP (314 aa). Residues 632–652 are nonhelical region 7 (NC7); it reads CEPCPALSNLQDGDVRVVALP. The triple-helical region 6 (COL6) with 1 imperfection stretch occupies residues 653–723; the sequence is GPSGEKGEPG…AGPKGEKGDG (71 aa). Over residues 674 to 684 the composition is skewed to basic and acidic residues; the sequence is KAGERGLKGQK. Over residues 686–702 the composition is skewed to low complexity; sequence DAGNPGDPGTPGTTGRP. A nonhelical region 6 (NC6) region spans residues 724-738; that stretch reads CTACPSLQGTVTDMA. The triple-helical region 5 (COL5) with 3 imperfections stretch occupies residues 739 to 876; it reads GRPGQPGPKG…RGEKGEPGEC (138 aa). 3 stretches are compositionally biased toward low complexity: residues 766–781, 792–808, and 826–846; these read LPGV…VQGE, PQGE…QGLP, and PGVK…SGPP. Residues 788-840 enclose the Collagen-like 4 domain; sequence GVQGPQGEPGAPGLPGIQGLPGPRGPPGPTGEKGAQGSPGVKGATGPVGPPGA. The segment covering 864–873 has biased composition (basic and acidic residues); the sequence is KGPRGEKGEP. Residues 877-887 are nonhelical region 5 (NC5); the sequence is SCPSQGDLIFS. The Collagen-like 5 domain occupies 888–938; that stretch reads GMPGAPGLWMGSSWQPGPQGPPGIPGPPGPPGVPGLQGVPGNNGLPGQPGL. The segment at 888–939 is triple-helical region 4 (COL4) with 2 imperfections; it reads GMPGAPGLWMGSSWQPGPQGPPGIPGPPGPPGVPGLQGVPGNNGLPGQPGLT. The span at 905-917 shows a compositional bias: pro residues; it reads PQGPPGIPGPPGP. Residues 940–973 form a nonhelical region 4 (NC4) region; sequence AELGSLPIEQHLLKSICGDCVQGQRAHPGYLVEK. Positions 974–988 are triple-helical region 3 (COL3); that stretch reads GEKGDQGIPGVPGLD. The segment at 989–1011 is nonhelical region 3 (NC3); sequence NCAQCFLSLERPRAEEARGDNSE. Disordered regions lie at residues 1001–1429 and 1468–1517; these read RAEE…VPGS and MAAA…PGTK. Positions 1006–1008 match the Cell attachment site motif; it reads RGD. The segment at 1012 to 1433 is triple-helical region 2 (COL2) with 2 imperfections; it reads GDPGCVGSPG…PGVPGSMGDM (422 aa). Residues 1018-1075 enclose the Collagen-like 6 domain; the sequence is GSPGLPGPPGLPGQRGEEGPPGMRGSPGPPGPIGPPGFPGAVGSPGLPGLQGERGLTG. Pro residues-rich tracts occupy residues 1044 to 1055, 1160 to 1169, and 1199 to 1208; these read PGPPGPIGPPGF, FPGPPGPPGF, and SPGPPGPPGI. Residues 1217–1226 show a composition bias toward basic and acidic residues; that stretch reads LDGKDGKPGL. A Cell attachment site motif is present at residues 1227–1229; the sequence is RGD. Positions 1271 to 1284 are enriched in low complexity; the sequence is RPGAEGEPGAMGPQ. 2 stretches are compositionally biased toward pro residues: residues 1286–1302 and 1330–1342; these read RPGP…PGQP and QPGP…PPGE. Low complexity predominate over residues 1369-1378; sequence DPGAAGQKGQ. The span at 1386-1395 shows a compositional bias: gly residues; that stretch reads GMPGGPGKSG. The segment covering 1420–1429 has biased composition (low complexity); that stretch reads SPGLPGVPGS. Residues 1434-1472 form a nonhelical region 2 (NC2) region; that stretch reads VNYDEIKRFIRQEIIKMFDERMAYYTSRMQFPMEMAAAP. Collagen-like domains follow at residues 1472-1524 and 1528-1576; these read PGRP…GDIG and AGEN…GKAG. The segment at 1473 to 1578 is triple-helical region 1 (COL1) with 2 imperfections; sequence GRPGPPGKDG…MGQPGKAGHC (106 aa). A nonhelical region 1 (NC1) region spans residues 1579 to 1604; that stretch reads NPSDCFGAMPMEQQYPPMKTMKGPFG.

The protein belongs to the fibril-associated collagens with interrupted helices (FACIT) family. Homotrimer. Interacts with FBN1, fibronectin and integrins ITGA1/ITGB1 and ITGA2/ITGB1. Integrin ITGA1/ITGB1 binds to a unique site within COL16A1 located close to its C-terminal end between collagenous domains COL1-COL3. In terms of processing, prolines at the third position of the tripeptide repeating unit (G-X-Y) are hydroxylated in some or all of the chains. Post-translationally, glycosylated. As to expression, in papillary dermis, is a component of specialized fibrillin-1-containing microfibrils, whereas in territorial cartilage matrix, it is localized to a discrete population of thin, weakly banded collagen fibrils in association with other collagens (at protein level). In the placenta, where it is found in the amnion, a membranous tissue lining the amniotic cavity. Within the amnion, it is found in an acellular, relatively dense layer of a complex network of reticular fibers. Also located to a fibroblast layer beneath this dense layer. Exists in tissues in association with other types of collagen.

It localises to the secreted. The protein localises to the extracellular space. It is found in the extracellular matrix. Involved in mediating cell attachment and inducing integrin-mediated cellular reactions, such as cell spreading and alterations in cell morphology. The polypeptide is Collagen alpha-1(XVI) chain (COL16A1) (Homo sapiens (Human)).